The sequence spans 684 residues: DNA gyrase subunit B, novobiocin-sensitive (684 aa).

The disordered stretch occupies residues 1–22 (MADSGNPNENTPSVATGENGEV). The interval 154 to 302 (VKTDGYRWTQ…RMLSVEIAMQ (149 aa)) is novobiocin-binding. A Toprim domain is found at 463-577 (CEIFIVEGDS…AGHVYLSRPP (115 aa)). The Mg(2+) site is built by Glu469, Asp542, and Asp544.

It belongs to the type II topoisomerase GyrB family. As to quaternary structure, heterotetramer, composed of two GyrA and two GyrB chains. In the heterotetramer, GyrA contains the active site tyrosine that forms a transient covalent intermediate with DNA, while GyrB binds cofactors and catalyzes ATP hydrolysis. Mg(2+) serves as cofactor. It depends on Mn(2+) as a cofactor. Requires Ca(2+) as cofactor.

The protein resides in the cytoplasm. The catalysed reaction is ATP-dependent breakage, passage and rejoining of double-stranded DNA.. In terms of biological role, a type II topoisomerase that negatively supercoils closed circular double-stranded (ds) DNA in an ATP-dependent manner to modulate DNA topology and maintain chromosomes in an underwound state. Negative supercoiling favors strand separation, and DNA replication, transcription, recombination and repair, all of which involve strand separation. Also able to catalyze the interconversion of other topological isomers of dsDNA rings, including catenanes and knotted rings. Type II topoisomerases break and join 2 DNA strands simultaneously in an ATP-dependent manner. The sequence is that of DNA gyrase subunit B, novobiocin-sensitive from Streptomyces niveus (Streptomyces spheroides).